Here is a 98-residue protein sequence, read N- to C-terminus: UPF0235 protein CCNA_03737 (98 aa).

The protein belongs to the UPF0235 family.

This chain is UPF0235 protein CCNA_03737, found in Caulobacter vibrioides (strain NA1000 / CB15N) (Caulobacter crescentus).